Reading from the N-terminus, the 642-residue chain is Threonine--tRNA ligase (642 aa).

Residues methionine 1–threonine 61 form the TGS domain. Positions aspartate 243 to proline 534 are catalytic. The residue at position 286 (lysine 286) is an N6-acetyllysine. Positions 334, 385, and 511 each coordinate Zn(2+).

This sequence belongs to the class-II aminoacyl-tRNA synthetase family. As to quaternary structure, homodimer. It depends on Zn(2+) as a cofactor.

The protein resides in the cytoplasm. It catalyses the reaction tRNA(Thr) + L-threonine + ATP = L-threonyl-tRNA(Thr) + AMP + diphosphate + H(+). Its function is as follows. Catalyzes the attachment of threonine to tRNA(Thr) in a two-step reaction: L-threonine is first activated by ATP to form Thr-AMP and then transferred to the acceptor end of tRNA(Thr). Also edits incorrectly charged L-seryl-tRNA(Thr). The chain is Threonine--tRNA ligase from Escherichia coli O9:H4 (strain HS).